The sequence spans 374 residues: MKAVHFGAGNIGRGFIGALLVDAGYEVTFVDVNEKIIDALNERNEYKVTVAGERKETETVTNVRGINSKTNEKEAIDAIAEADIVTTAVGPTVLPYIAKTIAQGLKQRTASKPVNMIACENAIRATSQLKKDVLSHLSEEETTALLKDAGFADAAVDRIVPNVQSDDILHVTVEPFFEWVVEKPALKGDAVQLGKAVLVEDLAPYIERKLFTVNTGHAVAAYVGYRKGKKTIKEALADDYIKHRVRGALNETKAMLVEEYQFDAEAHEDYIDKILLRFQNPHLEDLVERVGRGPIRKLGPADRLVKPAKYLAEKGLHPESLAETIFDALHFYAEGDPESEELRALVDEKGYVDAFCEISKLEKDHPLVEIVAKE.

Residue 3-14 (AVHFGAGNIGRG) coordinates NAD(+).

It belongs to the mannitol dehydrogenase family.

The catalysed reaction is D-mannitol 1-phosphate + NAD(+) = beta-D-fructose 6-phosphate + NADH + H(+). This is Mannitol-1-phosphate 5-dehydrogenase from Shouchella clausii (strain KSM-K16) (Alkalihalobacillus clausii).